The following is a 99-amino-acid chain: Ubiquitin-related modifier 1 homolog (99 aa).

A 1-thioglycine modification is found at Gly-99. Gly-99 participates in a covalent cross-link: Glycyl lysine isopeptide (Gly-Lys) (interchain with K-? in acceptor proteins).

It belongs to the URM1 family. Interacts with cer. C-terminal thiocarboxylation occurs in 2 steps, it is first acyl-adenylated (-COAMP) via the hesA/moeB/thiF part of the MOCS3 homolog, then thiocarboxylated (-COSH) via the rhodanese domain of the MOCS3 homolog.

The protein resides in the cytoplasm. It participates in tRNA modification; 5-methoxycarbonylmethyl-2-thiouridine-tRNA biosynthesis. Its function is as follows. Acts as a sulfur carrier required for 2-thiolation of mcm(5)S(2)U at tRNA wobble positions of cytosolic tRNA(Lys), tRNA(Glu) and tRNA(Gln). Serves as sulfur donor in tRNA 2-thiolation reaction by being thiocarboxylated (-COSH) at its C-terminus by MOCS3. The sulfur is then transferred to tRNA to form 2-thiolation of mcm(5)S(2)U. Also acts as a ubiquitin-like protein (UBL) that is covalently conjugated via an isopeptide bond to lysine residues of target proteins such as Prx2/Jafrac1, Ciao1, Eip71CD and GILT1. The thiocarboxylated form serves as substrate for conjugation and oxidative stress specifically induces the formation of UBL-protein conjugates. In Drosophila persimilis (Fruit fly), this protein is Ubiquitin-related modifier 1 homolog.